The following is a 427-amino-acid chain: Trigger factor (427 aa).

Residues 163–248 (GDTVVIDFVG…IHEVKAKEVP (86 aa)) form the PPIase FKBP-type domain.

It belongs to the FKBP-type PPIase family. Tig subfamily.

Its subcellular location is the cytoplasm. The catalysed reaction is [protein]-peptidylproline (omega=180) = [protein]-peptidylproline (omega=0). In terms of biological role, involved in protein export. Acts as a chaperone by maintaining the newly synthesized protein in an open conformation. Functions as a peptidyl-prolyl cis-trans isomerase. The polypeptide is Trigger factor (Streptococcus pneumoniae (strain 70585)).